The sequence spans 488 residues: Glycogen synthase (488 aa).

Residue Lys-16 coordinates ADP-alpha-D-glucose.

Belongs to the glycosyltransferase 1 family. Bacterial/plant glycogen synthase subfamily.

It catalyses the reaction [(1-&gt;4)-alpha-D-glucosyl](n) + ADP-alpha-D-glucose = [(1-&gt;4)-alpha-D-glucosyl](n+1) + ADP + H(+). It functions in the pathway glycan biosynthesis; glycogen biosynthesis. Functionally, synthesizes alpha-1,4-glucan chains using ADP-glucose. This Marinobacter nauticus (strain ATCC 700491 / DSM 11845 / VT8) (Marinobacter aquaeolei) protein is Glycogen synthase.